The sequence spans 479 residues: MSGPQAPEPTLEGQADASAGSPDEDAAEGIQHSHRMLSFSDALLSIIATVMEFDKSVQRLLATRIAVYLMTFLIVTVAWAAHTRLFQVVGKIDDTLALLNLFSLMVTFPEVPLGIFLFCMCVIAIGAVQALIVLYAFHFPHLLSPQIERSAHRGLYRQRVLGIIVRGPALCLAAAGFSLFFYPASYLLMAMVIVLPHVSKAAGWCRAQLVGPREPPAHSVEVFTFDLHEPLSKERVEAFSDGVYAIVATLLILDICEDNVPDAKDVKEKFQGSLVAALGESGPHFLAYFGSFATVGLLWFAHHSLFLHIRRATQPMGLLNTLSLAFVGGLPLAYQQTSAFTKQPRDELESVRISCAIIFLASIFQFAIWTTALLQEGETLQPSARFGGREHAFMFAKLALYPCASLLAFACTCVLSSFSTAIFHAMQIAVPFAFLLLRLLVRLALAGLRALRGLVGPVLARPAPGAADEAQSPLLPAPC.

The interval 1–26 is disordered; the sequence is MSGPQAPEPTLEGQADASAGSPDEDA. Over 1–33 the chain is Cytoplasmic; it reads MSGPQAPEPTLEGQADASAGSPDEDAAEGIQHS. The chain crosses the membrane as a helical span at residues 34-56; sequence HRMLSFSDALLSIIATVMEFDKS. Positions 35 to 41 match the RxxxFSD motif 1 motif; it reads RMLSFSD. The interval 52 to 58 is short helix H2-1; the sequence is EFDKSVQ. Residues 57 to 64 lie on the Lumenal side of the membrane; the sequence is VQRLLATR. Residues 65 to 87 traverse the membrane as a helical segment; that stretch reads IAVYLMTFLIVTVAWAAHTRLFQ. At 88-93 the chain is on the cytoplasmic side; that stretch reads VVGKID. A helical membrane pass occupies residues 94–103; the sequence is DTLALLNLFS. At 104–113 the chain is on the lumenal side; the sequence is LMVTFPEVPL. Residues 114–135 traverse the membrane as a helical segment; sequence GIFLFCMCVIAIGAVQALIVLY. Over 136-159 the chain is Cytoplasmic; sequence AFHFPHLLSPQIERSAHRGLYRQR. A helical transmembrane segment spans residues 160 to 180; it reads VLGIIVRGPALCLAAAGFSLF. Residues 181 to 185 are Lumenal-facing; sequence FYPAS. Residues 186 to 205 form a helical membrane-spanning segment; it reads YLLMAMVIVLPHVSKAAGWC. The Cytoplasmic portion of the chain corresponds to 206–232; sequence RAQLVGPREPPAHSVEVFTFDLHEPLS. Residues 233–257 traverse the membrane as a helical segment; that stretch reads KERVEAFSDGVYAIVATLLILDICE. The short motif at 235 to 241 is the RxxxFSD motif 2 element; it reads RVEAFSD. The Lumenal segment spans residues 258 to 284; the sequence is DNVPDAKDVKEKFQGSLVAALGESGPH. The segment at 263 to 271 is short helix H1-2; sequence AKDVKEKFQ. The tract at residues 273-279 is short helix H2-2; it reads SLVAALG. Residues 285–307 form a helical membrane-spanning segment; that stretch reads FLAYFGSFATVGLLWFAHHSLFL. The Cytoplasmic portion of the chain corresponds to 308-313; it reads HIRRAT. A helical transmembrane segment spans residues 314 to 335; it reads QPMGLLNTLSLAFVGGLPLAYQ. The Lumenal portion of the chain corresponds to 336–350; that stretch reads QTSAFTKQPRDELES. Residues 351–371 form a helical membrane-spanning segment; that stretch reads VRISCAIIFLASIFQFAIWTT. The Cytoplasmic portion of the chain corresponds to 372–391; the sequence is ALLQEGETLQPSARFGGREH. A helical membrane pass occupies residues 392–415; that stretch reads AFMFAKLALYPCASLLAFACTCVL. At 416–417 the chain is on the lumenal side; that stretch reads SS. Residues 418-444 traverse the membrane as a helical segment; that stretch reads FSTAIFHAMQIAVPFAFLLLRLLVRLA. The Cytoplasmic portion of the chain corresponds to 445 to 479; it reads LAGLRALRGLVGPVLARPAPGAADEAQSPLLPAPC.

Belongs to the TMEM175 family. In terms of assembly, homodimer. Interacts with AKT (AKT1, AKT2 or AKT3); leading to formation of the lysoK(GF) complex, which activates the channel. Interacts with LAMP1; inhibiting the proton channel activity of TMEM175. Interacts with LAMP2; inhibiting the proton channel activity of TMEM175.

The protein localises to the endosome membrane. It localises to the lysosome membrane. It catalyses the reaction H(+)(in) = H(+)(out). The enzyme catalyses K(+)(in) = K(+)(out). Its activity is regulated as follows. Active at low pH (under pH 4.6): proton channel activity is activated by luminal side protons. Polyunsaturated fatty acids, such as arachidonic acid, also activate the channel activity. Proton channel activity is directly inhibited by LAMP1 or LAMP2, facilitating lysosomal acidification. Channel activity is activated following interaction with AKT (AKT1, AKT2 or AKT3): interaction promotes activation from closed to an open state. Activation by AKT is independent of AKT serine/threonine-protein kinase activity. In terms of biological role, proton-activated proton channel that catalyzes proton efflux from endosomes and lysosomes to maintain a steady-state pH. Activated at low pH (under pH 4.6) by luminal side protons: selectively mediates lysosomal proton release from lysosomes, eliciting a proton leak that balances V-ATPase activity to maintain pH homeostasis. Regulation of lumenal pH stability is required for autophagosome-lysosome fusion. Also acts as a potassium channel at higher pH, regulating potassium conductance in endosomes and lysosomes. Constitutes the pore-forming subunit of the lysoK(GF) complex, a complex activated by extracellular growth factors. The lysoK(GF) complex is composed of TMEM175 and AKT (AKT1, AKT2 or AKT3), a major target of growth factor receptors: in the complex, TMEM175 channel is opened by conformational changes by AKT, leading to its activation. The lysoK(GF) complex is required to protect neurons against stress-induced damage. This Bos taurus (Bovine) protein is Endosomal/lysosomal proton channel TMEM175.